Reading from the N-terminus, the 104-residue chain is Pterin-4-alpha-carbinolamine dehydratase (104 aa).

Ala-2 is modified (N-acetylalanine). Residues 61–63 (DHH) and 78–81 (STHE) each bind substrate.

Belongs to the pterin-4-alpha-carbinolamine dehydratase family. As to quaternary structure, homotetramer and homodimer. Heterotetramer with HNF1A; formed by a dimer of dimers. Interacts with HNF1B (via HNF-p1 domain); the interaction increases HNF1B transactivation activity. In terms of tissue distribution, mainly expressed in the liver, in pancreatic cells, and in the kidney, especially in the distal convoluted tubule, in the cortical thick ascending limb of Henle's loop and in the connecting tubule.

It is found in the cytoplasm. It localises to the nucleus. The enzyme catalyses (4aS,6R)-4a-hydroxy-L-erythro-5,6,7,8-tetrahydrobiopterin = (6R)-L-erythro-6,7-dihydrobiopterin + H2O. In terms of biological role, involved in tetrahydrobiopterin biosynthesis. Seems to both prevent the formation of 7-pterins and accelerate the formation of quinonoid-BH2. Coactivator for HNF1A-dependent transcription. Regulates the dimerization of homeodomain protein HNF1A and enhances its transcriptional activity. Also acts as a coactivator for HNF1B-dependent transcription. The polypeptide is Pterin-4-alpha-carbinolamine dehydratase (Pcbd1) (Mus musculus (Mouse)).